Reading from the N-terminus, the 308-residue chain is Peptidyl-prolyl cis-trans isomerase CYP8 (308 aa).

The 160-residue stretch at 56-215 folds into the PPIase cyclophilin-type domain; that stretch reads FTDPESSEEA…QPITIGYISS (160 aa).

It carries out the reaction [protein]-peptidylproline (omega=180) = [protein]-peptidylproline (omega=0). Its function is as follows. PPIases accelerate the folding of proteins. It catalyzes the cis-trans isomerization of proline imidic peptide bonds in oligopeptides. This is Peptidyl-prolyl cis-trans isomerase CYP8 (CPR8) from Saccharomyces cerevisiae (strain ATCC 204508 / S288c) (Baker's yeast).